The following is a 334-amino-acid chain: MPIRHCIVHLIDKKPDGSPAVLHARDSELAESAAIENMLADLNESYNAKQGKAWGLFHPESGAFPFSGWLKEYLDGGQDFTAFSRVAVEHLQKLMEESNLSVGGHVLFAHYQQGMTDYLAIALLHHSEGVAVTDQLDVTPSRHLDLGQLHLAARINISEWQNNKQSKQYISFIKGKNGKKVSEYFRDFIGCQEGVDGPGETRTLLKAFSDFVESEDLPEDSAREKTKTLVDYASSQAKLGEPMGLEELSELIDEDRPKAFYDHIRNKDYGLSPEIPADKRTLNQFRRFTGRAEGLSISFEAHLLGSKIEYDEEAGTLIIKGLPTQLTDQLKRRN.

The protein belongs to the YejK family.

The protein localises to the cytoplasm. The protein resides in the nucleoid. The sequence is that of Nucleoid-associated protein PFL_1060 from Pseudomonas fluorescens (strain ATCC BAA-477 / NRRL B-23932 / Pf-5).